A 347-amino-acid polypeptide reads, in one-letter code: UPF0284 protein M1425_0030 (347 aa).

It belongs to the UPF0284 family.

The protein is UPF0284 protein M1425_0030 of Saccharolobus islandicus (strain M.14.25 / Kamchatka #1) (Sulfolobus islandicus).